The following is a 271-amino-acid chain: 3-methyl-2-oxobutanoate hydroxymethyltransferase (271 aa).

Mg(2+) is bound by residues D42 and D86. Residues 42-43 (DS), D86, and K116 each bind 3-methyl-2-oxobutanoate. E118 is a Mg(2+) binding site. E185 acts as the Proton acceptor in catalysis.

This sequence belongs to the PanB family. In terms of assembly, homodecamer; pentamer of dimers. Mg(2+) serves as cofactor.

It is found in the cytoplasm. The catalysed reaction is 3-methyl-2-oxobutanoate + (6R)-5,10-methylene-5,6,7,8-tetrahydrofolate + H2O = 2-dehydropantoate + (6S)-5,6,7,8-tetrahydrofolate. The protein operates within cofactor biosynthesis; (R)-pantothenate biosynthesis; (R)-pantoate from 3-methyl-2-oxobutanoate: step 1/2. Catalyzes the reversible reaction in which hydroxymethyl group from 5,10-methylenetetrahydrofolate is transferred onto alpha-ketoisovalerate to form ketopantoate. The polypeptide is 3-methyl-2-oxobutanoate hydroxymethyltransferase (Synechococcus sp. (strain CC9605)).